Reading from the N-terminus, the 193-residue chain is Potassium-transporting ATPase KdpC subunit (193 aa).

Residues 7 to 27 (PLVVLFVILTAVTGLAYPAVM) form a helical membrane-spanning segment.

It belongs to the KdpC family. The system is composed of three essential subunits: KdpA, KdpB and KdpC.

It is found in the cell inner membrane. Part of the high-affinity ATP-driven potassium transport (or Kdp) system, which catalyzes the hydrolysis of ATP coupled with the electrogenic transport of potassium into the cytoplasm. This subunit acts as a catalytic chaperone that increases the ATP-binding affinity of the ATP-hydrolyzing subunit KdpB by the formation of a transient KdpB/KdpC/ATP ternary complex. In Burkholderia cenocepacia (strain ATCC BAA-245 / DSM 16553 / LMG 16656 / NCTC 13227 / J2315 / CF5610) (Burkholderia cepacia (strain J2315)), this protein is Potassium-transporting ATPase KdpC subunit.